Consider the following 498-residue polypeptide: 3-octaprenyl-4-hydroxybenzoate carboxy-lyase (498 aa).

Asn176 lines the Mn(2+) pocket. Residues Ile179–Arg181, Arg193–Leu195, and Arg198–Gly199 each bind prenylated FMN. Mn(2+) is bound at residue Glu242. The active-site Proton donor is the Asp291.

Belongs to the UbiD family. Homohexamer. It depends on prenylated FMN as a cofactor. Mn(2+) is required as a cofactor.

It localises to the cell membrane. The catalysed reaction is a 4-hydroxy-3-(all-trans-polyprenyl)benzoate + H(+) = a 2-(all-trans-polyprenyl)phenol + CO2. It functions in the pathway cofactor biosynthesis; ubiquinone biosynthesis. Its function is as follows. Catalyzes the decarboxylation of 3-octaprenyl-4-hydroxy benzoate to 2-octaprenylphenol, an intermediate step in ubiquinone biosynthesis. The sequence is that of 3-octaprenyl-4-hydroxybenzoate carboxy-lyase from Escherichia coli O6:K15:H31 (strain 536 / UPEC).